A 372-amino-acid polypeptide reads, in one-letter code: Chorismate synthase (372 aa).

The NADP(+) site is built by Arg-48 and Arg-54. FMN contacts are provided by residues Arg-125–Ser-127, Asn-238–Ala-239, Gly-278, Lys-293–Ser-297, and Arg-319.

It belongs to the chorismate synthase family. In terms of assembly, homotetramer. FMNH2 is required as a cofactor.

The enzyme catalyses 5-O-(1-carboxyvinyl)-3-phosphoshikimate = chorismate + phosphate. Its pathway is metabolic intermediate biosynthesis; chorismate biosynthesis; chorismate from D-erythrose 4-phosphate and phosphoenolpyruvate: step 7/7. Functionally, catalyzes the anti-1,4-elimination of the C-3 phosphate and the C-6 proR hydrogen from 5-enolpyruvylshikimate-3-phosphate (EPSP) to yield chorismate, which is the branch point compound that serves as the starting substrate for the three terminal pathways of aromatic amino acid biosynthesis. This reaction introduces a second double bond into the aromatic ring system. In Xylella fastidiosa (strain M23), this protein is Chorismate synthase.